The primary structure comprises 266 residues: Glucosamine-6-phosphate deaminase (266 aa).

The Proton acceptor; for enolization step role is filled by aspartate 72. Aspartate 141 acts as the For ring-opening step in catalysis. Histidine 143 acts as the Proton acceptor; for ring-opening step in catalysis. The active-site For ring-opening step is glutamate 148.

It belongs to the glucosamine/galactosamine-6-phosphate isomerase family. NagB subfamily. Homohexamer.

The enzyme catalyses alpha-D-glucosamine 6-phosphate + H2O = beta-D-fructose 6-phosphate + NH4(+). Its pathway is amino-sugar metabolism; N-acetylneuraminate degradation; D-fructose 6-phosphate from N-acetylneuraminate: step 5/5. Its activity is regulated as follows. Allosterically activated by N-acetylglucosamine 6-phosphate (GlcNAc6P). Its function is as follows. Catalyzes the reversible isomerization-deamination of glucosamine 6-phosphate (GlcN6P) to form fructose 6-phosphate (Fru6P) and ammonium ion. This Yersinia enterocolitica serotype O:8 / biotype 1B (strain NCTC 13174 / 8081) protein is Glucosamine-6-phosphate deaminase.